The following is a 491-amino-acid chain: UDP-N-acetylmuramoyl-L-alanyl-D-glutamate--2,6-diaminopimelate ligase (491 aa).

Ser-30 contacts UDP-N-acetyl-alpha-D-muramoyl-L-alanyl-D-glutamate. Gly-108 to Thr-114 contributes to the ATP binding site. UDP-N-acetyl-alpha-D-muramoyl-L-alanyl-D-glutamate contacts are provided by residues Asn-149, Thr-150 to Thr-151, Ser-177, Gln-183, and Arg-185. At Lys-217 the chain carries N6-carboxylysine. Meso-2,6-diaminopimelate contacts are provided by residues Arg-383, Asp-407–Arg-410, Gly-458, and Glu-462. Positions Asp-407 to Arg-410 match the Meso-diaminopimelate recognition motif motif.

It belongs to the MurCDEF family. MurE subfamily. Requires Mg(2+) as cofactor. Carboxylation is probably crucial for Mg(2+) binding and, consequently, for the gamma-phosphate positioning of ATP.

It is found in the cytoplasm. The enzyme catalyses UDP-N-acetyl-alpha-D-muramoyl-L-alanyl-D-glutamate + meso-2,6-diaminopimelate + ATP = UDP-N-acetyl-alpha-D-muramoyl-L-alanyl-gamma-D-glutamyl-meso-2,6-diaminopimelate + ADP + phosphate + H(+). The protein operates within cell wall biogenesis; peptidoglycan biosynthesis. In terms of biological role, catalyzes the addition of meso-diaminopimelic acid to the nucleotide precursor UDP-N-acetylmuramoyl-L-alanyl-D-glutamate (UMAG) in the biosynthesis of bacterial cell-wall peptidoglycan. This chain is UDP-N-acetylmuramoyl-L-alanyl-D-glutamate--2,6-diaminopimelate ligase, found in Listeria monocytogenes serotype 4b (strain F2365).